A 197-amino-acid polypeptide reads, in one-letter code: Inner membrane-spanning protein YciB (197 aa).

The next 5 membrane-spanning stretches (helical) occupy residues isoleucine 36–leucine 56, glycine 64–serine 84, tryptophan 90–glycine 110, leucine 135–phenylalanine 155, and phenylalanine 162–leucine 182.

This sequence belongs to the YciB family.

The protein resides in the cell inner membrane. Plays a role in cell envelope biogenesis, maintenance of cell envelope integrity and membrane homeostasis. This Pseudomonas putida (strain ATCC 700007 / DSM 6899 / JCM 31910 / BCRC 17059 / LMG 24140 / F1) protein is Inner membrane-spanning protein YciB.